A 317-amino-acid polypeptide reads, in one-letter code: MEHHHQHHRHHQRDDGEDDRQSFGVPPPHVDAPPQPHGLYQSQPHFDPYAPTPQAPAPYRSETQFEPHAPPPYRSEPYFETPAPPPSFGHVSHVGHQSPNESYPPEHHRYGGYQQPSNSLLESHGDHSGVTHVAHHSSNQPQSSSGVYHKPDENRLPDNLAGLAGRATVKVYSKAEPNYNLTIRDGKVILAPADPSDEAQHWYKDEKYSTKVKDADGHPCFALVNKATGEAMKHSVGATHPVHLIRYVPDKLDESVLWTESKDFGDGYRTIRMVNNTRLNVDAYHGDSKSGGVRDGTTIVLWDWNKGDNQLWKIFPF.

Residues 1-11 show a composition bias toward basic residues; it reads MEHHHQHHRHH. Positions 1 to 157 are disordered; that stretch reads MEHHHQHHRH…YHKPDENRLP (157 aa). Pro residues predominate over residues 25 to 36; sequence VPPPHVDAPPQP. Residues 136–146 show a composition bias toward polar residues; that stretch reads HSSNQPQSSSG. The Ricin B-type lectin domain occupies 168–315; sequence TVKVYSKAEP…KGDNQLWKIF (148 aa).

As to quaternary structure, interacts (via N-terminus) with ATS3A and ATS3B. In terms of tissue distribution, expressed in roots, rosette leaves, stems, cauline leaves and flowers.

It is found in the nucleus. Its subcellular location is the cytoplasm. In terms of biological role, lectin which binds carbohydrates in vitro. Interacts through its lectin domain with glycan structures containing one or more Lewis X, Lewis Y or lactosamine motifs. May play a role in abiotic stress responses. May play a role in abscisic acid-induced stomatal closure. May play a role in disease resistance against Pseudomonas syringae through its involvement in stomatal movement. This Arabidopsis thaliana (Mouse-ear cress) protein is Ricin B-like lectin EULS3.